Reading from the N-terminus, the 302-residue chain is MPQDQHLGVDKAKILIEALPYIQRFSGKTLVVKYGGNAMTDPELESSFARDIVLLKTVGLNPIVVHGGGPQVDSFLKQLGRESDRIDGMRVTDEATMEVVEMVLGGSVNKSIVNLINKHGGRAIGLTGQDGNLLRARKLLMEKQEEDGSIKHIDLGMVGEVTGVKTDVLEMFTQSDFIPVIAPLGVDEKGNTYNINADLVAGKVAEALGAEKLILLTNISGVLDENKNLLTGLTTQEVDRLIETGVIYGGMIPKVGCALDAVKGGVVSAHIVDGRVPHATLLEIFTDHGVGTLISNRTQTTH.

Residues 68–69 (GG), R90, and N194 contribute to the substrate site.

This sequence belongs to the acetylglutamate kinase family. ArgB subfamily.

It is found in the cytoplasm. The catalysed reaction is N-acetyl-L-glutamate + ATP = N-acetyl-L-glutamyl 5-phosphate + ADP. It participates in amino-acid biosynthesis; L-arginine biosynthesis; N(2)-acetyl-L-ornithine from L-glutamate: step 2/4. In terms of biological role, catalyzes the ATP-dependent phosphorylation of N-acetyl-L-glutamate. This Acinetobacter baumannii (strain AB307-0294) protein is Acetylglutamate kinase.